The primary structure comprises 91 residues: Small ribosomal subunit protein bS16 (91 aa).

It belongs to the bacterial ribosomal protein bS16 family.

In Phytoplasma australiense, this protein is Small ribosomal subunit protein bS16.